Here is a 570-residue protein sequence, read N- to C-terminus: Proline--tRNA ligase (570 aa).

The interval 238–257 is disordered; it reads ARPAPAEHAEPRPLEKVETP.

Belongs to the class-II aminoacyl-tRNA synthetase family. ProS type 1 subfamily. As to quaternary structure, homodimer.

It is found in the cytoplasm. The enzyme catalyses tRNA(Pro) + L-proline + ATP = L-prolyl-tRNA(Pro) + AMP + diphosphate. Its function is as follows. Catalyzes the attachment of proline to tRNA(Pro) in a two-step reaction: proline is first activated by ATP to form Pro-AMP and then transferred to the acceptor end of tRNA(Pro). As ProRS can inadvertently accommodate and process non-cognate amino acids such as alanine and cysteine, to avoid such errors it has two additional distinct editing activities against alanine. One activity is designated as 'pretransfer' editing and involves the tRNA(Pro)-independent hydrolysis of activated Ala-AMP. The other activity is designated 'posttransfer' editing and involves deacylation of mischarged Ala-tRNA(Pro). The misacylated Cys-tRNA(Pro) is not edited by ProRS. This is Proline--tRNA ligase from Geobacter sulfurreducens (strain ATCC 51573 / DSM 12127 / PCA).